A 357-amino-acid chain; its full sequence is 5-hydroxytryptamine receptor 5A (357 aa).

Residues 1–36 (MDLPVNLTSFSLSTPSPLETNHSLGKDDLRPSSPLL) lie on the Extracellular side of the membrane. N-linked (GlcNAc...) asparagine glycosylation is found at N6 and N21. The helical transmembrane segment at 37-63 (SVFGVLILTLLGFLVAATFAWNLLVLA) threads the bilayer. The Cytoplasmic segment spans residues 64-76 (TILRVRTFHRVPH). A helical membrane pass occupies residues 77–103 (NLVASMAVSDVLVAALVMPLSLVHELS). The Extracellular portion of the chain corresponds to 104 to 114 (GRRWQLGRRLC). Cysteines 114 and 192 form a disulfide. Residues 115–137 (QLWIACDVLCCTASIWNVTAIAL) form a helical membrane-spanning segment. D121 is a serotonin binding site. The Cytoplasmic segment spans residues 138–155 (DRYWSITRHMEYTLRTRK). A helical transmembrane segment spans residues 156-176 (CVSNVMIALTWALSAVISLAP). The Extracellular segment spans residues 177-198 (LLFGWGETYSEGSEECQVSREP). The chain crosses the membrane as a helical span at residues 199 to 220 (SYAVFSTVGAFYLPLCVVLFVY). The Cytoplasmic portion of the chain corresponds to 221-287 (WKIYKAAKFR…QKEQRAALMV (67 aa)). The chain crosses the membrane as a helical span at residues 288 to 312 (GILIGVFVLCWIPFFLTELISPLCS). Residues 313–314 (CD) lie on the Extracellular side of the membrane. Residues 315 to 339 (IPAIWKSIFLWLGYSNSFFNPLIYT) traverse the membrane as a helical segment. The Cytoplasmic portion of the chain corresponds to 340 to 357 (AFNKNYNSAFKNFFSRQH).

It belongs to the G-protein coupled receptor 1 family.

The protein localises to the cell membrane. Its function is as follows. G-protein coupled receptor for 5-hydroxytryptamine (serotonin), a biogenic hormone that functions as a neurotransmitter, a hormone and a mitogen. Also functions as a receptor for ergot alkaloid derivatives and other psychoactive substances. Ligand binding causes a conformation change that triggers signaling via guanine nucleotide-binding proteins (G proteins) and modulates the activity of downstream effectors. HTR5A is coupled to G(i)/G(o) G alpha proteins and mediates inhibitory neurotransmission: signaling inhibits adenylate cyclase activity and activates a phosphatidylinositol-calcium second messenger system that regulates the release of Ca(2+) ions from intracellular stores. The chain is 5-hydroxytryptamine receptor 5A from Homo sapiens (Human).